The chain runs to 113 residues: UPF0060 membrane protein Mmcs_2513 (113 aa).

Transmembrane regions (helical) follow at residues A12–V32, G37–F57, I66–D86, and R92–P112.

Belongs to the UPF0060 family.

It localises to the cell membrane. The polypeptide is UPF0060 membrane protein Mmcs_2513 (Mycobacterium sp. (strain MCS)).